We begin with the raw amino-acid sequence, 427 residues long: Enolase (427 aa).

(2R)-2-phosphoglycerate is bound at residue glutamine 162. Glutamate 204 functions as the Proton donor in the catalytic mechanism. Aspartate 241, glutamate 282, and aspartate 309 together coordinate Mg(2+). Positions 334, 363, 364, and 385 each coordinate (2R)-2-phosphoglycerate. Catalysis depends on lysine 334, which acts as the Proton acceptor.

It belongs to the enolase family. The cofactor is Mg(2+).

The protein localises to the cytoplasm. The protein resides in the secreted. Its subcellular location is the cell surface. The enzyme catalyses (2R)-2-phosphoglycerate = phosphoenolpyruvate + H2O. Its pathway is carbohydrate degradation; glycolysis; pyruvate from D-glyceraldehyde 3-phosphate: step 4/5. Its function is as follows. Catalyzes the reversible conversion of 2-phosphoglycerate (2-PG) into phosphoenolpyruvate (PEP). It is essential for the degradation of carbohydrates via glycolysis. This chain is Enolase, found in Parafrankia sp. (strain EAN1pec).